The sequence spans 212 residues: Large ribosomal subunit protein uL3 (212 aa).

Q154 is modified (N5-methylglutamine).

It belongs to the universal ribosomal protein uL3 family. In terms of assembly, part of the 50S ribosomal subunit. Forms a cluster with proteins L14 and L19. In terms of processing, methylated by PrmB.

Its function is as follows. One of the primary rRNA binding proteins, it binds directly near the 3'-end of the 23S rRNA, where it nucleates assembly of the 50S subunit. This is Large ribosomal subunit protein uL3 from Hydrogenovibrio crunogenus (strain DSM 25203 / XCL-2) (Thiomicrospira crunogena).